The following is an 85-amino-acid chain: Small ribosomal subunit protein uS17 (85 aa).

Belongs to the universal ribosomal protein uS17 family. Part of the 30S ribosomal subunit.

One of the primary rRNA binding proteins, it binds specifically to the 5'-end of 16S ribosomal RNA. The chain is Small ribosomal subunit protein uS17 from Mesoplasma florum (strain ATCC 33453 / NBRC 100688 / NCTC 11704 / L1) (Acholeplasma florum).